The sequence spans 247 residues: Carboxy-S-adenosyl-L-methionine synthase (247 aa).

S-adenosyl-L-methionine is bound by residues Y39, 64–66 (GCS), 89–90 (DN), 117–118 (DI), N132, and R199.

Belongs to the class I-like SAM-binding methyltransferase superfamily. Cx-SAM synthase family. In terms of assembly, homodimer.

It catalyses the reaction prephenate + S-adenosyl-L-methionine = carboxy-S-adenosyl-L-methionine + 3-phenylpyruvate + H2O. Its function is as follows. Catalyzes the conversion of S-adenosyl-L-methionine (SAM) to carboxy-S-adenosyl-L-methionine (Cx-SAM). This Citrobacter koseri (strain ATCC BAA-895 / CDC 4225-83 / SGSC4696) protein is Carboxy-S-adenosyl-L-methionine synthase.